A 149-amino-acid polypeptide reads, in one-letter code: 3-dehydroquinate dehydratase (149 aa).

Tyrosine 24 acts as the Proton acceptor in catalysis. The substrate site is built by asparagine 75, histidine 81, and aspartate 88. Histidine 101 (proton donor) is an active-site residue. Substrate is bound by residues 102–103 and arginine 112; that span reads IS.

It belongs to the type-II 3-dehydroquinase family. As to quaternary structure, homododecamer.

The catalysed reaction is 3-dehydroquinate = 3-dehydroshikimate + H2O. It functions in the pathway metabolic intermediate biosynthesis; chorismate biosynthesis; chorismate from D-erythrose 4-phosphate and phosphoenolpyruvate: step 3/7. In terms of biological role, catalyzes a trans-dehydration via an enolate intermediate. This chain is 3-dehydroquinate dehydratase, found in Methylobacterium radiotolerans (strain ATCC 27329 / DSM 1819 / JCM 2831 / NBRC 15690 / NCIMB 10815 / 0-1).